The sequence spans 67 residues: Conotoxin Im3.1 (67 aa).

Residues 1-20 (MMSTLVVLLTICLLMLPLTA) form the signal peptide. Positions 21–52 (RQLDADQLADQLAERMEDISADQNRWFDPVKR) are excised as a propeptide. 3 cysteine pairs are disulfide-bonded: Cys-53/Cys-63, Cys-54/Cys-61, and Cys-59/Cys-64.

It belongs to the conotoxin M superfamily. As to expression, expressed by the venom duct.

Its subcellular location is the secreted. Probable neurotoxin. The protein is Conotoxin Im3.1 of Conus imperialis (Imperial cone).